Reading from the N-terminus, the 62-residue chain is Bacteriocin piscicolin-126 (62 aa).

A propeptide spanning residues 1-18 is cleaved from the precursor; it reads MKTVKELSVKEMQLTTGG. Cys27 and Cys32 are joined by a disulfide.

It is found in the secreted. Its function is as follows. Inhibits the growth of several Gram-positive bacteria, especially the food-borne pathogen L.monocytogenes, but has no effect on the growth of a number of yeasts and Gram-negative bacteria. The chain is Bacteriocin piscicolin-126 (pisA) from Carnobacterium maltaromaticum (Carnobacterium piscicola).